A 414-amino-acid chain; its full sequence is Serine--tRNA ligase (414 aa).

Thr230 to Glu232 contributes to the L-serine binding site. An ATP-binding site is contributed by Arg261–Glu263. Glu284 contributes to the L-serine binding site. An ATP-binding site is contributed by Glu348–Ser351. Ser382 provides a ligand contact to L-serine.

This sequence belongs to the class-II aminoacyl-tRNA synthetase family. Type-1 seryl-tRNA synthetase subfamily. As to quaternary structure, homodimer. The tRNA molecule binds across the dimer.

The protein localises to the cytoplasm. The catalysed reaction is tRNA(Ser) + L-serine + ATP = L-seryl-tRNA(Ser) + AMP + diphosphate + H(+). The enzyme catalyses tRNA(Sec) + L-serine + ATP = L-seryl-tRNA(Sec) + AMP + diphosphate + H(+). It functions in the pathway aminoacyl-tRNA biosynthesis; selenocysteinyl-tRNA(Sec) biosynthesis; L-seryl-tRNA(Sec) from L-serine and tRNA(Sec): step 1/1. In terms of biological role, catalyzes the attachment of serine to tRNA(Ser). Is also able to aminoacylate tRNA(Sec) with serine, to form the misacylated tRNA L-seryl-tRNA(Sec), which will be further converted into selenocysteinyl-tRNA(Sec). The protein is Serine--tRNA ligase of Nitratiruptor sp. (strain SB155-2).